The sequence spans 68 residues: MQVSVRDNNVDQALRALKKKLQREGVFREMKLKQHYEKPSEKRAREKAEAIRRARKLARKKLQREGML.

It belongs to the bacterial ribosomal protein bS21 family.

The protein is Small ribosomal subunit protein bS21 of Jannaschia sp. (strain CCS1).